An 84-amino-acid polypeptide reads, in one-letter code: Small ribosomal subunit protein uS17 (84 aa).

The protein belongs to the universal ribosomal protein uS17 family. Part of the 30S ribosomal subunit.

Functionally, one of the primary rRNA binding proteins, it binds specifically to the 5'-end of 16S ribosomal RNA. This chain is Small ribosomal subunit protein uS17, found in Proteus mirabilis (strain HI4320).